The sequence spans 979 residues: Peptidyl-glycine alpha-amidating monooxygenase (979 aa).

An N-terminal signal peptide occupies residues 1–24 (MAGRARSRLLLLLGLLALQSSCLA). The interval 1–497 (MAGRARSRLL…EGPWEPELAG (497 aa)) is peptidylglycine alpha-hydroxylating monooxygenase. A propeptide spanning residues 25-34 (FRSPLSVFKR) is cleaved from the precursor. Residues 35 to 869 (FKETTRSFSN…KKLIKDPGSG (835 aa)) lie on the Intragranular side of the membrane. 5 disulfide bridges follow: Cys-46-Cys-185, Cys-80-Cys-125, Cys-113-Cys-130, Cys-226-Cys-333, and Cys-292-Cys-314. Cu(2+) contacts are provided by His-106 and His-107. Cu(2+) contacts are provided by His-171, His-241, His-243, and Met-313. Positions 498-823 (DFHVEEALEW…SRLEVEHRSV (326 aa)) are peptidyl-alpha-hydroxyglycine alpha-amidating lyase. 4 NHL repeats span residues 501–544 (VEEA…NSFD), 570–611 (AEIL…LEPR), 620–665 (LGRS…FSPS), and 673–717 (GEES…FKTD). Position 520 (Val-520) interacts with Ca(2+). Arg-533 is an a protein binding site. His-585 contributes to the Zn(2+) binding site. Residue Leu-587 participates in Ca(2+) binding. Residues Cys-634 and Cys-655 are joined by a disulfide bond. A protein is bound at residue Tyr-654. His-690 is a binding site for Zn(2+). A disulfide bond links Cys-702 and Cys-713. Arg-706 contacts a protein. Asn-765 carries N-linked (GlcNAc...) asparagine glycosylation. One copy of the NHL 5 repeat lies at 769 to 812 (GEIIDVFKPVRKHFDMPHDIVASEDGTVYIGDAHTNTVWKFTLT). His-786 is a Zn(2+) binding site. A Ca(2+)-binding site is contributed by Asp-787. A helical transmembrane segment spans residues 870–893 (VPVVLITTLLVIPVVVLLAIAMFI). Residues 894-979 (RWKKSRAFGD…APLPTPAPSS (86 aa)) are Cytoplasmic-facing. A phosphoserine mark is found at Ser-924, Ser-925, Ser-935, and Ser-948. The interval 931–948 (NFFASRKGYSRKGFDRVS) is interaction with RASSF9. A disordered region spans residues 943-979 (GFDRVSTEGSDQEKDEDDGSESEEEYSAPLPTPAPSS). The residue at position 949 (Thr-949) is a Phosphothreonine. Residue Ser-952 is modified to Phosphoserine; by UHMK1. Over residues 955–968 (EKDEDDGSESEEEY) the composition is skewed to acidic residues. A Phosphoserine modification is found at Ser-964.

In the C-terminal section; belongs to the peptidyl-alpha-hydroxyglycine alpha-amidating lyase family. The protein in the N-terminal section; belongs to the copper type II ascorbate-dependent monooxygenase family. In terms of assembly, monomer. Interacts with RASSF9. Requires Zn(2+) as cofactor. The cofactor is Cu(2+).

Its subcellular location is the cytoplasmic vesicle. It is found in the secretory vesicle membrane. The catalysed reaction is a [peptide]-C-terminal glycine + 2 L-ascorbate + O2 = a [peptide]-C-terminal (2S)-2-hydroxyglycine + 2 monodehydro-L-ascorbate radical + H2O. It catalyses the reaction a [peptide]-C-terminal (2S)-2-hydroxyglycine = a [peptide]-C-terminal amide + glyoxylate. The enzyme catalyses N-dodecanoylglycine + 2 L-ascorbate + O2 = N-dodecanoyl-(2S)-hydroxyglycine + 2 monodehydro-L-ascorbate radical + H2O. It carries out the reaction N-dodecanoyl-(2S)-hydroxyglycine = dodecanamide + glyoxylate. The catalysed reaction is N-(9Z,12Z,15Z)-octadecatrienoylglycine + 2 L-ascorbate + O2 = N-(9Z,12Z,15Z)-octadecatrienoyl-(2S)-hydroxyglycine + 2 monodehydro-L-ascorbate radical + H2O. It catalyses the reaction N-(9Z,12Z,15Z)-octadecatrienoyl-(2S)-hydroxyglycine = (9Z,12Z,15Z)-octadecatrienamide + glyoxylate. The enzyme catalyses N-(9Z-octadecenoyl)glycine + 2 L-ascorbate + O2 = N-(9Z-octadecenoyl)-(2S)-hydroxyglycine + 2 monodehydro-L-ascorbate radical + H2O. It carries out the reaction N-(9Z-octadecenoyl)-(2S)-hydroxyglycine = (9Z)-octadecenamide + glyoxylate. The catalysed reaction is N-tetradecanoylglycine + 2 L-ascorbate + O2 = N-tetradecanoyl-(2S)-hydroxyglycine + 2 monodehydro-L-ascorbate radical + H2O. It catalyses the reaction N-tetradecanoyl-(2S)-hydroxyglycine = tetradecamide + glyoxylate. The enzyme catalyses N-decanoylglycine + 2 L-ascorbate + O2 = N-decanoyl-(2S)-hydroxyglycine + 2 monodehydro-L-ascorbate radical + H2O. It carries out the reaction N-decanoyl-(2S)-hydroxyglycine = decanamide + glyoxylate. The catalysed reaction is N-octanoylglycine + 2 L-ascorbate + O2 = N-octanoyl-(2S)-hydroxyglycine + 2 monodehydro-L-ascorbate radical + H2O. It catalyses the reaction N-octanoyl-(2S)-hydroxyglycine = octanamide + glyoxylate. Its activity is regulated as follows. PAM activity is inhibited by EDTA, phenylglyoxal and diethyl pyrocarbonate. PAL activity is stimulated by cadmium and inhibited by mercury. Its function is as follows. Bifunctional enzyme that catalyzes amidation of the C-terminus of proteins. Alpha-amidation is present at the C-terminus of many endocrine hormones and neuropeptides and is required for their activity. C-terminal amidation also takes place in response to protein fragmentation triggered by oxidative stress, promoting degradation of amidated protein fragments by the proteasome. Alpha-amidation involves two sequential reactions, both of which are catalyzed by separate catalytic domains of the enzyme. The first step, catalyzed by peptidyl alpha-hydroxylating monooxygenase (PHM) domain, is the copper-, ascorbate-, and O2- dependent stereospecific hydroxylation (with S stereochemistry) at the alpha-carbon (C-alpha) of the C-terminal glycine of the peptidylglycine substrate. The second step, catalyzed by the peptidylglycine amidoglycolate lyase (PAL) domain, is the zinc-dependent cleavage of the N-C-alpha bond, producing the alpha-amidated peptide and glyoxylate. Similarly, catalyzes the two-step conversion of an N-fatty acylglycine to a primary fatty acid amide and glyoxylate. This Mus musculus (Mouse) protein is Peptidyl-glycine alpha-amidating monooxygenase.